Here is a 346-residue protein sequence, read N- to C-terminus: 4-hydroxy-2-oxovalerate aldolase 2 (346 aa).

The 251-residue stretch at 8–258 (VTLVDTTLRD…HTGVELFPLI (251 aa)) folds into the Pyruvate carboxyltransferase domain. Substrate is bound by residues 16-17 (RD), Ser-170, and His-197. Asp-17 provides a ligand contact to Mn(2+). The Mn(2+) site is built by His-197 and His-199. Tyr-288 contributes to the substrate binding site.

This sequence belongs to the 4-hydroxy-2-oxovalerate aldolase family.

It carries out the reaction (S)-4-hydroxy-2-oxopentanoate = acetaldehyde + pyruvate. In Nocardia farcinica (strain IFM 10152), this protein is 4-hydroxy-2-oxovalerate aldolase 2.